The chain runs to 334 residues: Biotin synthase (334 aa).

The region spanning 54–281 (QAIQLSTLLS…KSYVRLSAGR (228 aa)) is the Radical SAM core domain. Residues Cys-69, Cys-73, and Cys-76 each contribute to the [4Fe-4S] cluster site. [2Fe-2S] cluster-binding residues include Cys-113, Cys-144, Cys-204, and Arg-276.

This sequence belongs to the radical SAM superfamily. Biotin synthase family. Homodimer. [4Fe-4S] cluster serves as cofactor. [2Fe-2S] cluster is required as a cofactor.

It catalyses the reaction (4R,5S)-dethiobiotin + (sulfur carrier)-SH + 2 reduced [2Fe-2S]-[ferredoxin] + 2 S-adenosyl-L-methionine = (sulfur carrier)-H + biotin + 2 5'-deoxyadenosine + 2 L-methionine + 2 oxidized [2Fe-2S]-[ferredoxin]. It functions in the pathway cofactor biosynthesis; biotin biosynthesis; biotin from 7,8-diaminononanoate: step 2/2. Catalyzes the conversion of dethiobiotin (DTB) to biotin by the insertion of a sulfur atom into dethiobiotin via a radical-based mechanism. This chain is Biotin synthase, found in Haemophilus ducreyi (strain 35000HP / ATCC 700724).